The primary structure comprises 175 residues: Crossover junction endodeoxyribonuclease RuvC (175 aa).

Catalysis depends on residues Asp8, Glu67, and Asp139. Residues Asp8, Glu67, and Asp139 each coordinate Mg(2+).

It belongs to the RuvC family. As to quaternary structure, homodimer which binds Holliday junction (HJ) DNA. The HJ becomes 2-fold symmetrical on binding to RuvC with unstacked arms; it has a different conformation from HJ DNA in complex with RuvA. In the full resolvosome a probable DNA-RuvA(4)-RuvB(12)-RuvC(2) complex forms which resolves the HJ. Mg(2+) serves as cofactor.

It is found in the cytoplasm. The enzyme catalyses Endonucleolytic cleavage at a junction such as a reciprocal single-stranded crossover between two homologous DNA duplexes (Holliday junction).. Its function is as follows. The RuvA-RuvB-RuvC complex processes Holliday junction (HJ) DNA during genetic recombination and DNA repair. Endonuclease that resolves HJ intermediates. Cleaves cruciform DNA by making single-stranded nicks across the HJ at symmetrical positions within the homologous arms, yielding a 5'-phosphate and a 3'-hydroxyl group; requires a central core of homology in the junction. The consensus cleavage sequence is 5'-(A/T)TT(C/G)-3'. Cleavage occurs on the 3'-side of the TT dinucleotide at the point of strand exchange. HJ branch migration catalyzed by RuvA-RuvB allows RuvC to scan DNA until it finds its consensus sequence, where it cleaves and resolves the cruciform DNA. This chain is Crossover junction endodeoxyribonuclease RuvC, found in Marinobacter nauticus (strain ATCC 700491 / DSM 11845 / VT8) (Marinobacter aquaeolei).